Reading from the N-terminus, the 83-residue chain is CLAVATA3/ESR (CLE)-related protein 20 (83 aa).

An N-terminal signal peptide occupies residues 1 to 29 (MKNKNMNPSRPRLLCLIVFLFLVIVLSKA).

This sequence belongs to the CLV3/ESR signal peptide family. Mostly expressed in roots, seedlings, leaves, flowers, stems and apex, and, to a lower extent, in siliques and pollen.

It localises to the secreted. The protein localises to the extracellular space. Its function is as follows. Extracellular signal peptide that regulates cell fate. Represses root apical meristem maintenance. Inhibits irreversibly root growth by reducing cell division rates in the root apical meristem. Regulates the transition of protophloem cells from proliferation to differentiation, thus impinging on postembryonic growth capacity of the root meristem; this signaling pathway requires CRN and CLV2. This is CLAVATA3/ESR (CLE)-related protein 20 from Arabidopsis thaliana (Mouse-ear cress).